A 208-amino-acid chain; its full sequence is FMN-dependent NADH:quinone oxidoreductase 1 (208 aa).

FMN is bound at residue serine 10.

The protein belongs to the azoreductase type 1 family. In terms of assembly, homodimer. The cofactor is FMN.

The catalysed reaction is 2 a quinone + NADH + H(+) = 2 a 1,4-benzosemiquinone + NAD(+). The enzyme catalyses N,N-dimethyl-1,4-phenylenediamine + anthranilate + 2 NAD(+) = 2-(4-dimethylaminophenyl)diazenylbenzoate + 2 NADH + 2 H(+). Its function is as follows. Quinone reductase that provides resistance to thiol-specific stress caused by electrophilic quinones. Contributes to resistance to 2-methylhydroquinone (2-MHQ) and catechol. Functionally, also exhibits azoreductase activity. Catalyzes the reductive cleavage of the azo bond in aromatic azo compounds to the corresponding amines. The protein is FMN-dependent NADH:quinone oxidoreductase 1 of Bacillus subtilis (strain 168).